Reading from the N-terminus, the 448-residue chain is FAD-linked oxidoreductase nodO (448 aa).

Residues 35-206 enclose the FAD-binding PCMH-type domain; that stretch reads PEHFPLAIVK…IRFFLKTCPL (172 aa).

This sequence belongs to the oxygen-dependent FAD-linked oxidoreductase family. FAD is required as a cofactor.

Its pathway is secondary metabolite biosynthesis. In terms of biological role, FAD-linked oxidoreductase; part of the gene cluster that mediates the biosynthesis of the indole diterpenes nodulisporic acids (NA). Nodulisporic acid A (NAA) and its chemically modified derivatives are of particular significance because of their highly potent insecticidal activity against blood-feeding arthropods and lack of observable adverse effects on mammals, in particular the tremogenicity associated with the paspaline-derived IDTs is not observed. The geranylgeranyl diphosphate (GGPP) synthase ggs1, localized outside of the cluster, is proposed to catalyze the first step in nodulisporic acid biosynthesis via conversion of farnesyl pyrophosphate and isopentyl pyrophosphate into geranylgeranyl pyrophosphate (GGPP). Condensation of indole-3-glycerol phosphate with GGPP by the prenyl transferase nodC then forms 3-geranylgeranylindole (3-GGI). Epoxidation by the FAD-dependent monooxygenase nodM leads to a single-epoxidized-GGI that is substrate of the terpene cyclase nodB for cyclization to yield emindole SB. The terminal methyl carbon, C28, of emindole SB is then oxidized by the cytochrome P450 monooxygenase nodW to produce nodulisporic acid F (NAF), the pentacyclic core of NAA. NAF is converted to nodulisporic acid E (NAE) via prenylation. This step is probably performed by one of the indole diterpene prenyltransferases nodD1 or nodD2. Several oxidation steps performed by the FAD-linked oxidoreductase nodO and one of the cytochrome P450 monooxygenase nodR, nodX or nodZ further convert NAE to nodulisporic acid D (NAD). NAD is substrate of cytochrome P450 monooxygenase nodJ to produce the precursor of nodulisporic acid C (NAC), converted to NAC by one of the indole diterpene prenyltransferases nodD1 or nodD2. The FAD-dependent monooxygenase nodY2 then oxidizes NAC to nodulisporic acid B (NAB). Finally NAB is converted to NAA by one of the cytochrome P450 monooxygenases nodR, nodX or nodZ. The protein is FAD-linked oxidoreductase nodO of Hypoxylon pulicicidum.